The sequence spans 439 residues: Dihydroorotate dehydrogenase (quinone), mitochondrial (439 aa).

A mitochondrion-targeting transit peptide spans 1 to 22 (MMHRVGFNVIGRRSFFTVNARR). Residues 37-53 (LTALLLAGSAGYLYFMN) traverse the membrane as a helical segment. FMN contacts are provided by residues 119–123 (AGLDK) and S143. Residue K123 participates in substrate binding. 168-172 (NRYGF) provides a ligand contact to substrate. Residues N215 and N245 each contribute to the FMN site. 245-250 (NVSSPN) serves as a coordination point for substrate. The active-site Nucleophile is S248. Residues K296 and S324 each contribute to the FMN site. 325 to 326 (NT) lines the substrate pocket. FMN contacts are provided by residues G350, G380, and 401 to 402 (YT).

This sequence belongs to the dihydroorotate dehydrogenase family. Type 2 subfamily. Requires FMN as cofactor.

The protein localises to the mitochondrion inner membrane. It carries out the reaction (S)-dihydroorotate + a quinone = orotate + a quinol. It participates in pyrimidine metabolism; UMP biosynthesis via de novo pathway; orotate from (S)-dihydroorotate (quinone route): step 1/1. In terms of biological role, catalyzes the conversion of dihydroorotate to orotate with quinone as electron acceptor. This chain is Dihydroorotate dehydrogenase (quinone), mitochondrial (URA9), found in Candida glabrata (strain ATCC 2001 / BCRC 20586 / JCM 3761 / NBRC 0622 / NRRL Y-65 / CBS 138) (Yeast).